Reading from the N-terminus, the 29-residue chain is Galanin (29 aa).

Position 29 is an alanine amide (Ala-29).

It belongs to the galanin family.

Its subcellular location is the secreted. Contracts smooth muscle of the gastrointestinal and genitourinary tract, regulates growth hormone release, modulates insulin release, and may be involved in the control of adrenal secretion. The sequence is that of Galanin (GAL) from Alligator mississippiensis (American alligator).